Here is a 217-residue protein sequence, read N- to C-terminus: MATIDVVNLSGEKVGSFELADEVFGAVNEDLLWEAVKHYRAGQHRGTHATKNKKLVSGAGKKLWKQKGTGRARVGSIRSPLWRHGGTVHGPQPRSYDYAFPRKKLLGALRSALAAKLADGKLTVVESFDVKEPKANAFRKTLAGLKVDKTALLIESAENKNLELSSRNLKGVELVAGNAVHPYHLLRYDRAVIARPALEKLQNSLKKAASKRHAEVA.

This sequence belongs to the universal ribosomal protein uL4 family. In terms of assembly, part of the 50S ribosomal subunit.

In terms of biological role, one of the primary rRNA binding proteins, this protein initially binds near the 5'-end of the 23S rRNA. It is important during the early stages of 50S assembly. It makes multiple contacts with different domains of the 23S rRNA in the assembled 50S subunit and ribosome. Its function is as follows. Forms part of the polypeptide exit tunnel. The protein is Large ribosomal subunit protein uL4 of Koribacter versatilis (strain Ellin345).